A 522-amino-acid polypeptide reads, in one-letter code: Putative thymidine phosphorylase (522 aa).

The protein belongs to the thymidine/pyrimidine-nucleoside phosphorylase family. Type 2 subfamily.

It carries out the reaction thymidine + phosphate = 2-deoxy-alpha-D-ribose 1-phosphate + thymine. This chain is Putative thymidine phosphorylase, found in Albidiferax ferrireducens (strain ATCC BAA-621 / DSM 15236 / T118) (Rhodoferax ferrireducens).